We begin with the raw amino-acid sequence, 150 residues long: 6,7-dimethyl-8-ribityllumazine synthase (150 aa).

5-amino-6-(D-ribitylamino)uracil is bound by residues Phe-11, 43-45 (VFD), and 67-69 (AVI). 72 to 73 (AT) is a binding site for (2S)-2-hydroxy-3-oxobutyl phosphate. The Proton donor role is filled by His-75. 5-amino-6-(D-ribitylamino)uracil is bound at residue Leu-100. (2S)-2-hydroxy-3-oxobutyl phosphate is bound at residue Arg-115.

This sequence belongs to the DMRL synthase family.

It catalyses the reaction (2S)-2-hydroxy-3-oxobutyl phosphate + 5-amino-6-(D-ribitylamino)uracil = 6,7-dimethyl-8-(1-D-ribityl)lumazine + phosphate + 2 H2O + H(+). It functions in the pathway cofactor biosynthesis; riboflavin biosynthesis; riboflavin from 2-hydroxy-3-oxobutyl phosphate and 5-amino-6-(D-ribitylamino)uracil: step 1/2. Its function is as follows. Catalyzes the formation of 6,7-dimethyl-8-ribityllumazine by condensation of 5-amino-6-(D-ribitylamino)uracil with 3,4-dihydroxy-2-butanone 4-phosphate. This is the penultimate step in the biosynthesis of riboflavin. The sequence is that of 6,7-dimethyl-8-ribityllumazine synthase from Pyrobaculum calidifontis (strain DSM 21063 / JCM 11548 / VA1).